The primary structure comprises 492 residues: GTPase Obg (492 aa).

The 158-residue stretch at 2–159 (PRFVDRVVIH…RELTLELKTV (158 aa)) folds into the Obg domain. The 181-residue stretch at 160 to 340 (ADVGLIGFPS…LIFGLWQMIS (181 aa)) folds into the OBG-type G domain. Residues 166–173 (GFPSAGKS), 191–195 (FTTLV), 212–215 (DVPG), 292–295 (NKID), and 321–323 (STV) contribute to the GTP site. Mg(2+) contacts are provided by S173 and T193. Positions 358-438 (PVPVDDSGFR…IGDMTFDWEP (81 aa)) constitute an OCT domain. A disordered region spans residues 449 to 492 (SGRGTDARLERTERVGAAERKAARRQRRTGDDAERGTTERGENT). Basic and acidic residues-rich tracts occupy residues 453 to 469 (TDAR…AERK) and 476 to 492 (RTGD…GENT).

This sequence belongs to the TRAFAC class OBG-HflX-like GTPase superfamily. OBG GTPase family. As to quaternary structure, monomer. Mg(2+) serves as cofactor.

It localises to the cytoplasm. In terms of biological role, an essential GTPase which binds GTP, GDP and possibly (p)ppGpp with moderate affinity, with high nucleotide exchange rates and a fairly low GTP hydrolysis rate. Plays a role in control of the cell cycle, stress response, ribosome biogenesis and in those bacteria that undergo differentiation, in morphogenesis control. This Mycobacterium avium (strain 104) protein is GTPase Obg.